A 381-amino-acid chain; its full sequence is MKRNAFEELRVQLRTLKWLGVLRFTIDFNKCLVRENASEERSAWLYLIGVVGITCSLIVYSTYFPSHFIMGKHNTTGNCYALINIRSCSIVTMLIYTQLYIQRFRFVALLQSILRFNQISGSHREEGRFAFYYYTHLSLLIICMLNYAYGYWTAGVRLTTIPIYLLQYGFSYLFLGQVVVLFACIQQILLSILKYYNQVVLKNIKSSKESREFYYNFCKYNQVIWLSYTEINHCFGLLLLLVTGLILLITPSGPFYLVSTIFEGRFRQNWQFSLMSFTAILWSLPWIVLLVLAMGRNDVQKEANKTAKMLTKVPRTGTGLDRMIEKFLLKNLRQKPILTAYGFFALDKSTLFKLFTAIFTYMVILVQFKEMENSTKSINKF.

Residues 1 to 43 are Cytoplasmic-facing; it reads MKRNAFEELRVQLRTLKWLGVLRFTIDFNKCLVRENASEERSA. A helical membrane pass occupies residues 44 to 64; that stretch reads WLYLIGVVGITCSLIVYSTYF. Residues 65–78 lie on the Extracellular side of the membrane; the sequence is PSHFIMGKHNTTGN. N-linked (GlcNAc...) asparagine glycosylation is present at Asn-74. Residues 79–101 form a helical membrane-spanning segment; that stretch reads CYALINIRSCSIVTMLIYTQLYI. The Cytoplasmic segment spans residues 102 to 128; sequence QRFRFVALLQSILRFNQISGSHREEGR. A helical transmembrane segment spans residues 129 to 149; it reads FAFYYYTHLSLLIICMLNYAY. Topologically, residues 150-172 are extracellular; the sequence is GYWTAGVRLTTIPIYLLQYGFSY. A helical transmembrane segment spans residues 173–193; that stretch reads LFLGQVVVLFACIQQILLSIL. The Cytoplasmic segment spans residues 194–234; sequence KYYNQVVLKNIKSSKESREFYYNFCKYNQVIWLSYTEINHC. Residues 235–255 form a helical membrane-spanning segment; that stretch reads FGLLLLLVTGLILLITPSGPF. The Extracellular portion of the chain corresponds to 256–273; the sequence is YLVSTIFEGRFRQNWQFS. A helical transmembrane segment spans residues 274–294; sequence LMSFTAILWSLPWIVLLVLAM. Over 295–350 the chain is Cytoplasmic; the sequence is GRNDVQKEANKTAKMLTKVPRTGTGLDRMIEKFLLKNLRQKPILTAYGFFALDKST. The helical transmembrane segment at 351 to 371 threads the bilayer; the sequence is LFKLFTAIFTYMVILVQFKEM. Over 372-381 the chain is Extracellular; sequence ENSTKSINKF. N-linked (GlcNAc...) asparagine glycosylation occurs at Asn-373.

This sequence belongs to the insect chemoreceptor superfamily. Gustatory receptor (GR) family. Gr21a subfamily. In terms of tissue distribution, expressed in the adult labellar chemosensory neurons and adult thorax and abdomen.

It is found in the cell membrane. Gustatory receptor which mediates acceptance or avoidance behavior, depending on its substrates. Plays a role in sustaining courtship behavior in males, possibly through the reception of a stimulating arrestant pheromone. This is Gustatory and pheromone receptor 39a, isoform D (Gr39a) from Drosophila melanogaster (Fruit fly).